Consider the following 257-residue polypeptide: Homeobox protein goosecoid (257 aa).

Residues 160-219 (KRRHRTIFTDEQLEALENLFQETKYPDVGTREQLARKVHLREEKVEVWFKNRRAKWRRQK) constitute a DNA-binding region (homeobox). Residues 213–257 (AKWRRQKRSSSEESENAEKWNKTSSSKASPEKREEEGKSDLDSDS) form a disordered region. Positions 241–257 (SPEKREEEGKSDLDSDS) are enriched in basic and acidic residues.

This sequence belongs to the paired homeobox family. Bicoid subfamily.

Its subcellular location is the nucleus. Regulates chordin (CHRD). May play a role in spatial programing within discrete embryonic fields or lineage compartments during organogenesis. In concert with NKX3-2, plays a role in defining the structural components of the middle ear; required for the development of the entire tympanic ring. Probably involved in the regulatory networks that define neural crest cell fate specification and determine mesoderm cell lineages in mammals. This chain is Homeobox protein goosecoid (GSC), found in Pongo pygmaeus (Bornean orangutan).